We begin with the raw amino-acid sequence, 150 residues long: MAASQCLCCSKFLLQRQNLACFLTNPHCGSIINADGHGEVWTDWNNMSKFFQYGWRCTTNENAYSNRTLMGNWNQERYDLRNIVQPKPLPSQFGHYFETTYDTSYNNKMPLSTHRFKREPHCFPGHQPELDPPRYKCTEKSTYMNSYSKS.

2 mn regions span residues Thr99–Pro110 and Lys140–Ser150.

It belongs to the CFAP68 family. In terms of assembly, microtubule inner protein component of sperm flagellar doublet microtubules.

The protein localises to the cytoplasm. It is found in the cytoskeleton. The protein resides in the cilium axoneme. It localises to the flagellum axoneme. Its subcellular location is the nucleus. The protein localises to the cell projection. It is found in the cilium. Its function is as follows. Microtubule inner protein (MIP) part of the dynein-decorated doublet microtubules (DMTs) in cilia axoneme, which is required for motile cilia beating. This Macaca fascicularis (Crab-eating macaque) protein is Cilia- and flagella-associated protein 68 (CFAP68).